Reading from the N-terminus, the 702-residue chain is Translation factor GUF1 homolog, chloroplastic (702 aa).

Over residues 1 to 30 the composition is skewed to low complexity; the sequence is MASAAPASRGAARASTAARDAPFAAAARGP. The segment at 1 to 41 is disordered; that stretch reads MASAAPASRGAARASTAARDAPFAAAARGPGRFRRDGNGRN. The tr-type G domain occupies 87–283; it reads SQIRNFSIIA…NIVKMIPPPP (197 aa). GTP is bound by residues 96 to 103, 162 to 166, and 216 to 219; these read AHIDHGKS, DTPGH, and NKID.

It belongs to the TRAFAC class translation factor GTPase superfamily. Classic translation factor GTPase family. LepA subfamily.

The protein localises to the plastid. The protein resides in the chloroplast. The catalysed reaction is GTP + H2O = GDP + phosphate + H(+). Functionally, promotes chloroplast protein synthesis. May act as a fidelity factor of the translation reaction, by catalyzing a one-codon backward translocation of tRNAs on improperly translocated ribosomes. In Micromonas pusilla (strain CCMP1545) (Picoplanktonic green alga), this protein is Translation factor GUF1 homolog, chloroplastic.